Here is a 2414-residue protein sequence, read N- to C-terminus: Centrosome-associated protein CEP250 (2414 aa).

Coiled-coil stretches lie at residues 91-153 (EEPN…ELVR) and 248-357 (LVAK…VEEE). 7 disordered regions span residues 356 to 384 (EEDT…DPQD), 672 to 707 (AEEA…QETA), 1191 to 1212 (SRPE…DPDQ), 1269 to 1303 (EAQK…QNSL), 2050 to 2071 (AGAR…QERQ), 2194 to 2238 (ALEE…KERL), and 2275 to 2317 (RERR…GSSD). The span at 371 to 381 (QSDCNGLSQFD) shows a compositional bias: polar residues. Residues 400–1165 (QQAVQDLRQQ…QLEALVAEQQ (766 aa)) adopt a coiled-coil conformation. Basic and acidic residues predominate over residues 684 to 704 (RGTREEKEELKDKLSEAHHQQ). Coiled-coil stretches lie at residues 1237 to 2200 (LQKL…EQQS) and 2231 to 2290 (GVEE…ASRA). Residues 1280–1289 (QDLQRQLSQS) are compositionally biased toward low complexity. The span at 2196-2209 (EEQQSGGPHSTSRA) shows a compositional bias: polar residues. Residues 2275–2286 (RERRKLKRDSVR) show a composition bias toward basic and acidic residues. Serine 2292 is subject to Phosphoserine. Residues 2305-2317 (QQDGRGSQRGSSD) show a composition bias toward low complexity. Positions 2320-2345 (LVVELQREVALLRAQLALERKQRQDY) form a coiled coil. Phosphoserine; by NEK2 is present on residues serine 2389 and serine 2393. Residues 2390–2414 (LNQSLTSPGPCLLHPSLDTTQNTHR) are disordered.

In terms of assembly, monomer and homodimer. Forms a complex in vitro with both NEK2 kinase and the PPP1CC catalytic subunit of protein phosphatase 1 (PP1). Interacts with CEP135. Interacts with CROCC/rootletin. Interacts with CNTLN. Interacts with NIN (via C-terminus). In terms of processing, differentially phosphorylated during cell cycle. Phosphorylation may regulate association/dissociation from centrosome. During M phase of mitosis, C-terminal part is phosphorylated by NEK2, suggesting that it may trigger the dissociation from the mitotic centrosome. Dephosphorylated in vitro by the PP1 phosphatase. As to expression, expressed in the retina.

It is found in the cytoplasm. It localises to the perinuclear region. Its subcellular location is the cytoskeleton. The protein resides in the microtubule organizing center. The protein localises to the centrosome. It is found in the centriole. It localises to the cilium basal body. Its subcellular location is the cell projection. The protein resides in the cilium. The protein localises to the photoreceptor outer segment. It is found in the photoreceptor inner segment. Its function is as follows. Plays an important role in centrosome cohesion during interphase. Recruits CCDC102B to the proximal ends of centrioles. Maintains centrosome cohesion by forming intercentriolar linkages. Accumulates at the proximal end of each centriole, forming supramolecular assemblies with viscous material properties that promote organelle cohesion. May be involved in ciliogenesis. The chain is Centrosome-associated protein CEP250 (Cep250) from Mus musculus (Mouse).